Here is a 1048-residue protein sequence, read N- to C-terminus: Putative cation efflux system protein SilA (1048 aa).

14 helical membrane passes run 14 to 34 (FLVM…IINT), 125 to 145 (VSSE…YALV), 338 to 358 (LSSK…LFLW), 363 to 383 (ALVA…VMHF), 391 to 411 (MSLG…IVMI), 446 to 466 (VGPA…PIFT), 485 to 505 (SMAG…GFWI), 539 to 559 (TLLV…QVGG), 737 to 757 (GMTV…AMVG), 871 to 891 (KLKL…YLAF), 897 to 917 (ALLI…FLYW), 928 to 948 (TGFI…LMYL), 985 to 1005 (AMTV…TGAG), and 1012 to 1032 (IAAP…FIIP).

This sequence belongs to the resistance-nodulation-cell division (RND) (TC 2.A.6) family.

It localises to the cell inner membrane. In terms of biological role, component of the sil cation-efflux system that confers resistance to silver. May be part of a three-component cation/proton antiporter. The chain is Putative cation efflux system protein SilA (silA) from Salmonella typhimurium.